The sequence spans 735 residues: DNA replication licensing factor mcm5-A (735 aa).

Residues 332–538 (IYETVAKSIA…RDMTLAKHVM (207 aa)) enclose the MCM domain. Arg372 lines the ADP pocket. Residues 513 to 516 (SRFD) carry the Arginine finger motif.

Belongs to the MCM family. As to quaternary structure, component of the mcm2-7 complex (RLF-M). The complex forms a toroidal hexameric ring with the proposed subunit order mcm2-mcm6-mcm4-mcm7-mcm3-mcm5. The heterodimer of mmcm3/mcm5 interacts with mcm4, mmcm6, mcm7 and weakly with mcm2. Component of the CMG helicase complex, composed of the mcm2-7 complex, the GINS complex and cdc45.

The protein localises to the nucleus. It is found in the chromosome. The enzyme catalyses ATP + H2O = ADP + phosphate + H(+). Its function is as follows. Acts as a component of the MCM2-7 complex (MCM complex) which is the replicative helicase essential for 'once per cell cycle' DNA replication initiation and elongation in eukaryotic cells. Core component of CDC45-MCM-GINS (CMG) helicase, the molecular machine that unwinds template DNA during replication, and around which the replisome is built. The active ATPase sites in the MCM2-7 ring are formed through the interaction surfaces of two neighboring subunits such that a critical structure of a conserved arginine finger motif is provided in trans relative to the ATP-binding site of the Walker A box of the adjacent subunit. The six ATPase active sites, however, are likely to contribute differentially to the complex helicase activity. This is DNA replication licensing factor mcm5-A (mcm5-a) from Xenopus laevis (African clawed frog).